Consider the following 383-residue polypeptide: Protein delta homolog 2 (383 aa).

Positions 1 to 26 (MPSGCRCLHLVCLLCILAAPVKPVRA) are cleaved as a signal peptide. EGF-like domains follow at residues 27-58 (DDCS…LHCE), 62-89 (RMPG…KFCD), 91-129 (DEHV…RDCE), and 131-172 (KEGP…AHCE). The Extracellular portion of the chain corresponds to 27-306 (DDCSSHCDLA…RQEAGLGKSS (280 aa)). Cystine bridges form between Cys-29-Cys-40, Cys-33-Cys-46, Cys-48-Cys-57, Cys-66-Cys-71, Cys-79-Cys-88, Cys-95-Cys-107, Cys-101-Cys-117, Cys-119-Cys-128, Cys-135-Cys-148, Cys-142-Cys-160, Cys-162-Cys-171, Cys-178-Cys-189, Cys-183-Cys-198, Cys-200-Cys-209, Cys-216-Cys-227, Cys-221-Cys-236, and Cys-238-Cys-247. An N-linked (GlcNAc...) asparagine glycan is attached at Asn-157. The EGF-like 5; calcium-binding domain maps to 174 to 210 (NVDDCLMRPCANGATCLDGINRFSCLCPEGFAGRFCT). An EGF-like 6; calcium-binding domain is found at 212–248 (NLDDCASRPCQRGARCRDRVHDFDCLCPSGYGGKTCE). Residues 307–327 (LVAVVVFGAVTATLVLSTVLL) traverse the membrane as a helical segment. The Cytoplasmic segment spans residues 328 to 383 (TLRAWRRGVCPPGPCCYPAPHYAPARQDQECQVSMLPAGLPLPPDLPPEPGKTTAL).

The protein resides in the membrane. Functionally, regulates adipogenesis. This chain is Protein delta homolog 2 (DLK2), found in Sus scrofa (Pig).